The primary structure comprises 204 residues: NAD(P)H dehydrogenase (quinone) (204 aa).

One can recognise a Flavodoxin-like domain in the interval 4-195 (IQIVFYSMYG…AIARFQGAHV (192 aa)). FMN-binding positions include 10-15 (SMYGHI) and 83-85 (TRF). Y12 is a binding site for NAD(+). W103 lines the substrate pocket. Residues 118 to 124 (STATQHG) and H139 contribute to the FMN site.

The protein belongs to the WrbA family. FMN serves as cofactor.

The enzyme catalyses a quinone + NADH + H(+) = a quinol + NAD(+). It carries out the reaction a quinone + NADPH + H(+) = a quinol + NADP(+). The polypeptide is NAD(P)H dehydrogenase (quinone) (Trichlorobacter lovleyi (strain ATCC BAA-1151 / DSM 17278 / SZ) (Geobacter lovleyi)).